A 197-amino-acid polypeptide reads, in one-letter code: Imidazoleglycerol-phosphate dehydratase (197 aa).

Belongs to the imidazoleglycerol-phosphate dehydratase family.

Its subcellular location is the cytoplasm. The enzyme catalyses D-erythro-1-(imidazol-4-yl)glycerol 3-phosphate = 3-(imidazol-4-yl)-2-oxopropyl phosphate + H2O. It participates in amino-acid biosynthesis; L-histidine biosynthesis; L-histidine from 5-phospho-alpha-D-ribose 1-diphosphate: step 6/9. The protein is Imidazoleglycerol-phosphate dehydratase of Syntrophobacter fumaroxidans (strain DSM 10017 / MPOB).